A 368-amino-acid polypeptide reads, in one-letter code: Xaa-Pro dipeptidase (368 aa).

Mn(2+) is bound by residues Asp-223, Asp-234, His-298, Glu-327, and Glu-341.

The protein belongs to the peptidase M24B family. Requires Mn(2+) as cofactor.

It localises to the cytoplasm. The enzyme catalyses Xaa-L-Pro dipeptide + H2O = an L-alpha-amino acid + L-proline. This Lactobacillus delbrueckii subsp. lactis protein is Xaa-Pro dipeptidase (pepQ).